A 453-amino-acid chain; its full sequence is MSQQQPTVGIVSLGCPKATVDSERILTQLKAEGYHLTNSYEEADAVIVNTCGFIDSAVQESLDTIGEALDENGRVIVTGCLGAKDGVIEKVHPSVLAVSGPAAYEEVLTAVHEAIAPPKHDPFVDLVPPQGIKLTPKHFAYLKISEGCNHRCTFCIIPSMRGNLVSRPVSDVVAEARRLKEAGVKELLVVSQDTAAYGVDVKYKTEFADGRPTKTSMFGLAEALSELGIWVRLHYVYPYPNVEDVIPLMAEGKLLPYLDMPLQHADPDILKAMKRPGNVDKTLERIKKWREQVPDLTIRSTFIVGFPGETEAQFQNLLDFIEEAQLDRVGCFQYSPVEGAVANDLAEPVPDEVKQERFDRFMQLQQQISANKMQAKIGKTIQVLVDEVDEEGAIARSKADAPEIDGMVFIPEGHHLNPGDFVEVEVFAADEYDLWATPVGEFVPQETSYVELG.

The region spanning 6–116 (PTVGIVSLGC…VLTAVHEAIA (111 aa)) is the MTTase N-terminal domain. The [4Fe-4S] cluster site is built by Cys15, Cys51, Cys80, Cys148, Cys152, and Cys155. The region spanning 134-371 (LTPKHFAYLK…MQLQQQISAN (238 aa)) is the Radical SAM core domain. One can recognise a TRAM domain in the interval 374-440 (QAKIGKTIQV…EYDLWATPVG (67 aa)).

It belongs to the methylthiotransferase family. RimO subfamily. It depends on [4Fe-4S] cluster as a cofactor.

The protein localises to the cytoplasm. It carries out the reaction L-aspartate(89)-[ribosomal protein uS12]-hydrogen + (sulfur carrier)-SH + AH2 + 2 S-adenosyl-L-methionine = 3-methylsulfanyl-L-aspartate(89)-[ribosomal protein uS12]-hydrogen + (sulfur carrier)-H + 5'-deoxyadenosine + L-methionine + A + S-adenosyl-L-homocysteine + 2 H(+). Catalyzes the methylthiolation of an aspartic acid residue of ribosomal protein uS12. The polypeptide is Ribosomal protein uS12 methylthiotransferase RimO (Hydrogenovibrio crunogenus (strain DSM 25203 / XCL-2) (Thiomicrospira crunogena)).